The chain runs to 299 residues: DNA-binding transcriptional repressor CapW (299 aa).

The interval 1-22 is disordered; the sequence is MTDESKPTDDQPTSKGRQGARW. Residues 1–95 form a winged HTH domain region; it reads MTDESKPTDD…SFKAVFPSSA (95 aa). Positions 96–207 are WYL domain; sequence VERYLDDLLR…LTRIKCCKYV (112 aa). A WYL domain is found at 131 to 211; it reads GRRLNADIVG…KCCKYVGQDR (81 aa). The interval 156–200 is probable ligand-binding region; sequence YQSLTDPEGGERMLSPHALVHDGNRWHVRAYCHKRKAFRDFSLTR. The tract at residues 208 to 299 is WCX domain; that stretch reads GQDRDRADED…RDEIKDLIQY (92 aa).

As to quaternary structure, homodimer.

In terms of biological role, transcriptional regulator of a CBASS antivirus system. CBASS (cyclic oligonucleotide-based antiphage signaling system) provides immunity against bacteriophage. The CD-NTase protein synthesizes cyclic nucleotides in response to infection; these serve as specific second messenger signals. The signals activate a diverse range of effectors, leading to bacterial cell death and thus abortive phage infection. A type III CBASS system, part of a Cap17-CapW-CdnC-Cap7-Cap6-Cap18 locus. Binds specifically to palindromes that overlap the -10 site in the promoter of cdnC, found between the genes for divergently transcribed capW and cdnC (cognate DNA). Probably represses transcription bidirectionally from the promoter. The chain is DNA-binding transcriptional repressor CapW from Pseudomonas aeruginosa.